The primary structure comprises 196 residues: SPRY domain-containing protein 7 (196 aa).

N-acetylalanine is present on alanine 2. The B30.2/SPRY domain maps to 2 to 184; sequence ATSVLCCLRC…FSEFYHTPPP (183 aa).

The polypeptide is SPRY domain-containing protein 7 (SPRYD7) (Homo sapiens (Human)).